Reading from the N-terminus, the 382-residue chain is Queuine tRNA-ribosyltransferase (382 aa).

Asp94 functions as the Proton acceptor in the catalytic mechanism. Residues 94–98 (DSGGF), Asp148, Gln192, and Gly219 each bind substrate. The RNA binding stretch occupies residues 250-256 (GVGKPED). Asp269 serves as the catalytic Nucleophile. Residues 274–278 (TRNAR) are RNA binding; important for wobble base 34 recognition. Cys307, Cys309, Cys312, and His338 together coordinate Zn(2+).

Belongs to the queuine tRNA-ribosyltransferase family. In terms of assembly, homodimer. Within each dimer, one monomer is responsible for RNA recognition and catalysis, while the other monomer binds to the replacement base PreQ1. It depends on Zn(2+) as a cofactor.

The enzyme catalyses 7-aminomethyl-7-carbaguanine + guanosine(34) in tRNA = 7-aminomethyl-7-carbaguanosine(34) in tRNA + guanine. It participates in tRNA modification; tRNA-queuosine biosynthesis. Catalyzes the base-exchange of a guanine (G) residue with the queuine precursor 7-aminomethyl-7-deazaguanine (PreQ1) at position 34 (anticodon wobble position) in tRNAs with GU(N) anticodons (tRNA-Asp, -Asn, -His and -Tyr). Catalysis occurs through a double-displacement mechanism. The nucleophile active site attacks the C1' of nucleotide 34 to detach the guanine base from the RNA, forming a covalent enzyme-RNA intermediate. The proton acceptor active site deprotonates the incoming PreQ1, allowing a nucleophilic attack on the C1' of the ribose to form the product. After dissociation, two additional enzymatic reactions on the tRNA convert PreQ1 to queuine (Q), resulting in the hypermodified nucleoside queuosine (7-(((4,5-cis-dihydroxy-2-cyclopenten-1-yl)amino)methyl)-7-deazaguanosine). This is Queuine tRNA-ribosyltransferase from Haemophilus ducreyi (strain 35000HP / ATCC 700724).